Consider the following 362-residue polypeptide: G-protein coupled receptor 4 (362 aa).

Residues 1–8 (MGNRTLEG) lie on the Extracellular side of the membrane. A glycan (N-linked (GlcNAc...) asparagine) is linked at N3. A helical transmembrane segment spans residues 9 to 45 (CHVDSRMDHLFPPSLYIFVIGVGLPTNCLALWAAYRQ). Intrachain disulfides connect C9–C258 and C90–C168. Residues 46-49 (VRQR) lie on the Cytoplasmic side of the membrane. The helical transmembrane segment at 50 to 80 (NELGVYLMNLSIADLLYICTLPLWVDYFLHH) threads the bilayer. The Extracellular portion of the chain corresponds to 81 to 85 (DNWIH). A helical transmembrane segment spans residues 86 to 121 (GPGSCKLFGFIFYTNIYISIAFLCCISVDRYLAVAH). Topologically, residues 122–129 (PLRFARLR) are cytoplasmic. The chain crosses the membrane as a helical span at residues 130 to 156 (RVKTAVAVSSVVWATELGANSAPLFHD). Residues 157 to 172 (ELFRDRYNHTFCFEKF) are Extracellular-facing. Residues 157–172 (ELFRDRYNHTFCFEKF) are extracellular loop 2 (ECL2). N-linked (GlcNAc...) asparagine glycosylation occurs at N164. A helical membrane pass occupies residues 173–210 (PMEGWVAWMNLYRVFVGFLFPWALMLLSYRGILRAVRG). At 211–214 (SVST) the chain is on the cytoplasmic side. Residues 215–250 (ERQEKVKIKRLALSLIAIVLVCFAPYHVLLLSRSAV) traverse the membrane as a helical segment. Residues 251–260 (YLRRPRDCGF) are Extracellular-facing. A helical membrane pass occupies residues 261-289 (EERVFSAYHSSLAFTSLNCVADPILYCLV). Residues 290–362 (NEGARSDVAK…VQLKMLPPAQ (73 aa)) are Cytoplasmic-facing.

It belongs to the G-protein coupled receptor 1 family.

The protein resides in the cell membrane. With respect to regulation, activated by a network of residues that connects an extracellular-facing cavity to Glu-145, a conserved charged residue buried in the transmembrane core of the receptor. Protonation likely drives conformational changes in extracellular loop 2 (ECL2), which stabilizes movement of transmembrane 3 (TM3) and a series of rearrangements that connect the extracellular-facing cavity to Glu-145, a residue only conserved in proton-sensing G-protein coupled receptors. Proton-sensing G-protein coupled receptor activated by extracellular pH, which is required to monitor pH changes and generate adaptive reactions. Activated by an optimal pH of 6.8-7.2. Ligand binding causes a conformation change that triggers signaling via guanine nucleotide-binding proteins (G proteins) and modulates the activity of downstream effectors, such as adenylate cyclase. GPR4 is mainly coupled to G(s) G proteins and mediates activation of adenylate cyclase activity. May also couple with G(q) and G(12)/G(13) G proteins. Acts as a key regulator of respiratory sensitivity to CO2/H(+) in brain retrotrapezoid nucleus neurons: acts by mediating detection of protons generated by the formation of carbonic acid in the blood, an important mechanism to impulse to breathe. Also acts as a regulator of acid secretion in the kidney collecting duct by maintaining acid-base homeostasis in the kidney. Acidosis-induced GPR4 activation increases paracellular gap formation and permeability of vascular endothelial cells, possibly through the G(12)/G(13)/Rho GTPase signaling pathway. The protein is G-protein coupled receptor 4 (GPR4) of Bos taurus (Bovine).